The chain runs to 452 residues: Cobyrinate a,c-diamide synthase (452 aa).

The region spanning 244-437 is the GATase cobBQ-type domain; that stretch reads KIAYAYDEAF…VHINLYTYKE (194 aa). Cys327 (nucleophile) is an active-site residue.

The protein belongs to the CobB/CbiA family. It depends on Mg(2+) as a cofactor.

It carries out the reaction cob(II)yrinate + 2 L-glutamine + 2 ATP + 2 H2O = cob(II)yrinate a,c diamide + 2 L-glutamate + 2 ADP + 2 phosphate + 2 H(+). It functions in the pathway cofactor biosynthesis; adenosylcobalamin biosynthesis; cob(II)yrinate a,c-diamide from sirohydrochlorin (anaerobic route): step 10/10. In terms of biological role, catalyzes the ATP-dependent amidation of the two carboxylate groups at positions a and c of cobyrinate, using either L-glutamine or ammonia as the nitrogen source. This Caldanaerobacter subterraneus subsp. tengcongensis (strain DSM 15242 / JCM 11007 / NBRC 100824 / MB4) (Thermoanaerobacter tengcongensis) protein is Cobyrinate a,c-diamide synthase.